A 1004-amino-acid chain; its full sequence is Sal-like protein 2 (1004 aa).

5 disordered regions span residues 1–33 (MSRR…EDHP), 51–122 (AHQN…EESS), 137–177 (GGGL…SGHL), 220–270 (PASP…EPPK), and 285–307 (PFSV…ALPG). The C2H2-type 1; atypical zinc-finger motif lies at 34–56 (QVCAKCCAQFSDPTEFLAHQNSC). The span at 71 to 81 (NPSNSSASSAP) shows a compositional bias: low complexity. The span at 83 to 98 (PEGHSRSQVMDTEHSN) shows a compositional bias: basic and acidic residues. The span at 99–110 (PPDSGSSGAPDP) shows a compositional bias: low complexity. A compositionally biased stretch (pro residues) spans 151–171 (PLPPESTPAPPPPPPPPPPPG). Phosphoserine is present on serine 243. C2H2-type zinc fingers lie at residues 372 to 394 (HKCR…LRSH), 400 to 422 (YKCN…FHRH), 629 to 651 (NQCV…YGQH), 657 to 679 (FKCK…FVGH), and 689 to 711 (NSCP…VRMH). Residues 712–910 (LGGQIPNGGS…PGESSGRKAC (199 aa)) form a disordered region. Residues 731 to 742 (QENSSEQSTASG) show a composition bias toward polar residues. Over residues 756 to 779 (PEEEMSEEEEEDEEEEEDVTDEDS) the composition is skewed to acidic residues. Residues serine 794, serine 799, and serine 803 each carry the phosphoserine modification. Positions 800–809 (EEVSGAEEEV) are enriched in acidic residues. Residues 810–819 (ATSVAAPTTV) are compositionally biased toward low complexity. The span at 820–829 (KEMDSNEKAP) shows a compositional bias: basic and acidic residues. Pro residues predominate over residues 832–841 (TLPPPPPPPD). Basic and acidic residues predominate over residues 896-910 (AMKKDPGESSGRKAC). A Glycyl lysine isopeptide (Lys-Gly) (interchain with G-Cter in ubiquitin) cross-link involves residue lysine 908. 2 C2H2-type zinc fingers span residues 908 to 930 (KACE…QKTH) and 937 to 961 (FTCV…LAHH).

The protein belongs to the sal C2H2-type zinc-finger protein family. As to expression, expressed throughout embryonic development. In adult predominantly in brain.

The protein localises to the nucleus. Functionally, probable transcription factor that plays a role in eye development before, during, and after optic fissure closure. The protein is Sal-like protein 2 (Sall2) of Mus musculus (Mouse).